The sequence spans 412 residues: 2-methylacyl-CoA dehydrogenase, mitochondrial (412 aa).

A mitochondrion-targeting transit peptide spans 1 to 25; sequence MHKLFAVRSLSSAIVKSFKSLQNQQ. FAD is bound by residues 154 to 163 and 187 to 189; these read LAMSEPNAGS and WCT. Serine 163 lines the substrate pocket. Substrate-binding positions include 209–210, tyrosine 264, and 271–274; these read SK and DLER. Glutamate 273 (proton acceptor) is an active-site residue. FAD-binding positions include arginine 299, glutamine 310, and 367–371; that span reads QCLGG. 394–395 contributes to the substrate binding site; the sequence is AG. 396 to 398 is a binding site for FAD; sequence TSE.

This sequence belongs to the acyl-CoA dehydrogenase family. Homotetramer. Requires FAD as cofactor. As to expression, expressed in flowers.

It is found in the mitochondrion. The catalysed reaction is 2-methylbutanoyl-CoA + oxidized [electron-transfer flavoprotein] + H(+) = (2E)-2-methylbut-2-enoyl-CoA + reduced [electron-transfer flavoprotein]. Functionally, short/branched-chain acyl-CoA dehydrogenase (SBCAD). Uses 2-methylbutanoyl-CoA as substrate. Minor activity with the straight-chain substrates, butanoyl-CoA, valeryl-CoA, hexanoyl-CoA, and octanoyl-CoA but no activity with isovaleryl-CoA. This is 2-methylacyl-CoA dehydrogenase, mitochondrial (2MBCD) from Solanum tuberosum (Potato).